A 123-amino-acid polypeptide reads, in one-letter code: Undecaprenol kinase (123 aa).

Topologically, residues 1-33 (MDSKDHRNELNRFFKSFVHAGRGIWETARTERN) are cytoplasmic. A helical transmembrane segment spans residues 34 to 51 (FQFHAAAACAVLICGFLV). At 52–57 (ELSIIE) the chain is on the extracellular side. A helical membrane pass occupies residues 58–74 (WMIIFLLIGGMFSLELL). The Cytoplasmic segment spans residues 75–99 (NTAIEHTVDLITDKHHPLAKAAKDA). The helical transmembrane segment at 100-120 (AAGAVCVFAVISCIIGLLIFL) threads the bilayer. The Extracellular portion of the chain corresponds to 121–123 (PKL).

This sequence belongs to the bacterial diacylglycerol kinase family.

It is found in the cell membrane. The enzyme catalyses di-trans,octa-cis-undecaprenol + ATP = di-trans,octa-cis-undecaprenyl phosphate + ADP + H(+). Its function is as follows. Catalyzes the phosphorylation of undecaprenol in vitro, which is probably the physiological substrate. Exhibits no detectable activity against other substrates such as monoacylglycerol, ceramide, or diacylglycerol (DAG). Appears indispensable for the maintenance of spore stability and viability in B.subtilis. In Bacillus subtilis (strain 168), this protein is Undecaprenol kinase (dgkA).